Consider the following 323-residue polypeptide: Tyrosine recombinase XerD (323 aa).

The 86-residue stretch at 21–106 (AEDDQAIQRF…TLRGFYALCL (86 aa)) folds into the Core-binding (CB) domain. The 191-residue stretch at 127–317 (SLPKALTESQ…ARQHLQTLHA (191 aa)) folds into the Tyr recombinase domain. Residues Arg-167, Lys-191, His-269, Arg-272, and His-295 contribute to the active site. Residue Tyr-304 is the O-(3'-phospho-DNA)-tyrosine intermediate of the active site.

It belongs to the 'phage' integrase family. XerD subfamily. Forms a cyclic heterotetrameric complex composed of two molecules of XerC and two molecules of XerD.

The protein localises to the cytoplasm. Site-specific tyrosine recombinase, which acts by catalyzing the cutting and rejoining of the recombining DNA molecules. The XerC-XerD complex is essential to convert dimers of the bacterial chromosome into monomers to permit their segregation at cell division. It also contributes to the segregational stability of plasmids. This is Tyrosine recombinase XerD from Xanthomonas campestris pv. campestris (strain ATCC 33913 / DSM 3586 / NCPPB 528 / LMG 568 / P 25).